The chain runs to 282 residues: Transcription repressor MYB4 (282 aa).

2 HTH myb-type domains span residues 9–61 and 62–116; these read KAHT…INYL and RPDL…RRKL. DNA-binding regions (H-T-H motif) lie at residues 37-61 and 89-112; these read WRSL…INYL and WSLI…NTHI. Positions 119-145 are disordered; that stretch reads RGIDPTSHRPIQESSASQDSKPTQLEP. Residues 130-145 are compositionally biased toward polar residues; that stretch reads QESSASQDSKPTQLEP.

As to quaternary structure, interacts with BHLH12/MYC1 and BHLH42/TT8. Interacts with SAD2. As to expression, widely expressed at low level. Highly expressed in siliques. Weakly expressed in seedlings, young and mature leaves, cauline leaves, stems, flower buds and roots.

It is found in the nucleus. Its function is as follows. Transcription repressor involved in regulation of protection against UV. Mediates transcriptional repression of CYP73A5, the gene encoding trans-cinnamate 4-monooxygenase, thereby regulating the accumulation of the UV-protectant compound sinapoylmalate. This is Transcription repressor MYB4 (MYB4) from Arabidopsis thaliana (Mouse-ear cress).